The following is a 392-amino-acid chain: MTEEFNESMINDIKEGDKVTGEVQQVEDKQVVVHINGGKFNGIIPISQLSTHHIENPSEVVKVGDEVEAYVTKIEFDEENDTGAYILSKRQLETEKSYEYLQEKLDNDEVIEAEVTEVVKGGLVVDVGQRGFVPASLISTDFIEDFSVFDGQTIRIKVEELDPENNRVILSRKAVEQLENDAKKASILDSLNEGDVIDGKVARLTNFGAFIDIGGVDGLVHVSELSHEHVQTPEEVVSVGEAVKVKVKSVEKDSERISLSIKDTLPTPFENIKGKFHEDDVIEGTVVRLANFGAFVEIAPSVQGLVHISEIDHKHIGSPNEVLEPGQQVNVKILGIDEDNERISLSIKATLPKENVIESDASTTQSYLEDDNDEDKPTLGDVFGDKFKDLKF.

4 S1 motif domains span residues 16 to 90 (GDKV…LSKR), 108 to 173 (DEVI…LSRK), 194 to 262 (GDVI…LSIK), and 279 to 348 (DDVI…LSIK). The disordered stretch occupies residues 361–380 (ASTTQSYLEDDNDEDKPTLG).

This sequence belongs to the bacterial ribosomal protein bS1 family.

Binds mRNA; thus facilitating recognition of the initiation point. It is needed to translate mRNA with a short Shine-Dalgarno (SD) purine-rich sequence. This Staphylococcus epidermidis (strain ATCC 35984 / DSM 28319 / BCRC 17069 / CCUG 31568 / BM 3577 / RP62A) protein is Small ribosomal subunit protein bS1 (rpsA).